The following is a 133-amino-acid chain: Exonuclease VapC9 (133 aa).

The PINc domain occupies 5–113; sequence YLVDASALYA…LVLVTQDREL (109 aa). Mg(2+)-binding residues include Asp8, Asp92, and Asp110.

The protein belongs to the PINc/VapC protein family. In terms of assembly, homodimer, 2 of which then form a homotetramer. It depends on Mg(2+) as a cofactor.

Its activity is regulated as follows. Inhibited by EDTA. Functionally, toxic component of a type II toxin-antitoxin (TA) system. Its function is as follows. Has ribonuclease activity. Has a slow ssDNA exonuclease activity. This Pyrobaculum aerophilum (strain ATCC 51768 / DSM 7523 / JCM 9630 / CIP 104966 / NBRC 100827 / IM2) protein is Exonuclease VapC9.